We begin with the raw amino-acid sequence, 439 residues long: Nuclear distribution protein PAC1 (439 aa).

Residues 55-90 adopt a coiled-coil conformation; that stretch reads NSIVRLQSKIMELEKNCEELQKSIDEQQSSTNQISN. WD repeat units follow at residues 106–145, 149–193, 199–240, 243–282, 295–335, 355–392, and 402–438; these read TLDA…LPLQ, AHMD…TLSH, GHEH…CIKS, PHTQ…SMGI, IPDP…FIPH, DHNS…LSTT, and NKGF…TSFM.

The protein belongs to the WD repeat LIS1/nudF family. As to quaternary structure, self-associates. Interacts with NDL1 and dynein.

The protein localises to the cytoplasm. It is found in the cytoskeleton. It localises to the spindle pole. Positively regulates the activity of the minus-end directed microtubule motor protein dynein. Plays a central role in positioning the mitotic spindle at the bud neck during cell division. Targets cytoplasmic dynein to microtubule plus ends, thereby promoting dynein-mediated microtubule sliding along the bud cortex and consequently the movement of the mitotic spindle to the bud neck. The chain is Nuclear distribution protein PAC1 from Kluyveromyces lactis (strain ATCC 8585 / CBS 2359 / DSM 70799 / NBRC 1267 / NRRL Y-1140 / WM37) (Yeast).